The sequence spans 290 residues: S-adenosylmethionine-dependent nucleotide dehydratase (290 aa).

The 221-residue stretch at 6–226 (SGNNIIPSVN…VNRHSKNKFL (221 aa)) folds into the Radical SAM core domain. C22, C26, and C29 together coordinate [4Fe-4S] cluster.

Belongs to the radical SAM superfamily. Viperin family. It depends on [4Fe-4S] cluster as a cofactor.

It carries out the reaction UTP + AH2 + S-adenosyl-L-methionine = 3'-deoxy-3',4'-didehydro-UTP + 5'-deoxyadenosine + L-methionine + A + H2O + H(+). Its function is as follows. Expression of pVip47 in E.coli (strain MG1655) confers resistance to phage P1; has no effect against T7. Catalyzes the conversion of uridine triphosphate (UTP) to 3'-deoxy-3',4'-didehydro-UTP (ddhUTP), probably via a SAM-dependent radical mechanism. The modified nucleotide represses transcription from T7 RNA polymerase-directed genes (possibly by acting as chain terminators), strongly suggesting these nucleotides block viral polymerase transcription. How this protein allows bacteria to resist viruses that do not encode their own RNA polymerase (such as lambda, P1) is unknown. The polypeptide is S-adenosylmethionine-dependent nucleotide dehydratase (Flammeovirga pacifica).